The sequence spans 157 residues: Small ribosomal subunit protein uS7 (157 aa).

This sequence belongs to the universal ribosomal protein uS7 family. In terms of assembly, part of the 30S ribosomal subunit. Contacts proteins S9 and S11.

Its function is as follows. One of the primary rRNA binding proteins, it binds directly to 16S rRNA where it nucleates assembly of the head domain of the 30S subunit. Is located at the subunit interface close to the decoding center, probably blocks exit of the E-site tRNA. This chain is Small ribosomal subunit protein uS7, found in Chloroflexus aurantiacus (strain ATCC 29366 / DSM 635 / J-10-fl).